The sequence spans 158 residues: SsrA-binding protein (158 aa).

It belongs to the SmpB family.

It is found in the cytoplasm. In terms of biological role, required for rescue of stalled ribosomes mediated by trans-translation. Binds to transfer-messenger RNA (tmRNA), required for stable association of tmRNA with ribosomes. tmRNA and SmpB together mimic tRNA shape, replacing the anticodon stem-loop with SmpB. tmRNA is encoded by the ssrA gene; the 2 termini fold to resemble tRNA(Ala) and it encodes a 'tag peptide', a short internal open reading frame. During trans-translation Ala-aminoacylated tmRNA acts like a tRNA, entering the A-site of stalled ribosomes, displacing the stalled mRNA. The ribosome then switches to translate the ORF on the tmRNA; the nascent peptide is terminated with the 'tag peptide' encoded by the tmRNA and targeted for degradation. The ribosome is freed to recommence translation, which seems to be the essential function of trans-translation. This chain is SsrA-binding protein, found in Bifidobacterium longum (strain DJO10A).